A 255-amino-acid chain; its full sequence is Triosephosphate isomerase (255 aa).

Residue 9-11 coordinates substrate; sequence NWK. His95 serves as the catalytic Electrophile. The Proton acceptor role is filled by Glu167. Substrate is bound by residues Gly173, Ser212, and 233–234; that span reads GG.

Belongs to the triosephosphate isomerase family. As to quaternary structure, homodimer.

The protein localises to the cytoplasm. The catalysed reaction is D-glyceraldehyde 3-phosphate = dihydroxyacetone phosphate. It participates in carbohydrate biosynthesis; gluconeogenesis. Its pathway is carbohydrate degradation; glycolysis; D-glyceraldehyde 3-phosphate from glycerone phosphate: step 1/1. In terms of biological role, involved in the gluconeogenesis. Catalyzes stereospecifically the conversion of dihydroxyacetone phosphate (DHAP) to D-glyceraldehyde-3-phosphate (G3P). The protein is Triosephosphate isomerase of Klebsiella pneumoniae.